A 446-amino-acid chain; its full sequence is Rhamnogalacturonase A (446 aa).

A signal peptide spans 1–18 (MPALPILALALAPLLVNG). A disulfide bridge links C39 with C65. N-linked (GlcNAc...) asparagine glycans are attached at residues N50, N115, and N124. Residue D216 is the Proton donor of the active site. C218 and C235 form a disulfide bridge. 3 N-linked (GlcNAc...) asparagine glycosylation sites follow: N236, N281, and N318. 2 disulfide bridges follow: C341-C347 and C369-C378.

This sequence belongs to the glycosyl hydrolase 28 family.

It is found in the secreted. The enzyme catalyses Endohydrolysis of alpha-D-GalA-(1-&gt;2)-alpha-L-Rha glycosidic bond in the rhamnogalacturonan I backbone with initial inversion of anomeric configuration releasing oligosaccharides with beta-D-GalA at the reducing end.. Its function is as follows. Pectinolytic enzymes consist of four classes of enzymes: pectine lyase, polygalacturonase, pectin methylesterase and rhamnogalacturonase. Hydrolyzes alpha-D-galacturonopyranosyl-(1,2)-alpha-L-rhamnopyranosyl linkages in the backbone of the hairy regions of pectins. The polypeptide is Rhamnogalacturonase A (rhgA) (Aspergillus niger).